The chain runs to 368 residues: snRNA-activating protein complex subunit 1 (368 aa).

The SNAPC3-binding stretch occupies residues 1–168 (MGTPPGLQTD…EEFKDPSDRV (168 aa)). The segment at 164–268 (PSDRVMKLIT…AESLAKIKSK (105 aa)) is SNAPC4-binding. Disordered regions lie at residues 224-257 (QQWHKDRKNPSLKSKTNDGEEKMEGNSQETERCE) and 275-368 (QASK…RRKH). Residues 238 to 257 (KTNDGEEKMEGNSQETERCE) show a composition bias toward basic and acidic residues. Residues serine 289 and serine 290 each carry the phosphoserine modification.

As to quaternary structure, part of the SNAPc complex composed of 5 subunits: SNAPC1, SNAPC2, SNAPC3, SNAPC4 and SNAPC5. SNAPC1 interacts with SNAPC3, SNAPC4 and TBP.

The protein localises to the nucleus. Part of the SNAPc complex required for the transcription of both RNA polymerase II and III small-nuclear RNA genes. Binds to the proximal sequence element (PSE), a non-TATA-box basal promoter element common to these 2 types of genes. Recruits TBP and BRF2 to the U6 snRNA TATA box. This is snRNA-activating protein complex subunit 1 (SNAPC1) from Homo sapiens (Human).